We begin with the raw amino-acid sequence, 441 residues long: uncharacterized protein (441 aa).

This is an uncharacterized protein from Methanocaldococcus jannaschii (strain ATCC 43067 / DSM 2661 / JAL-1 / JCM 10045 / NBRC 100440) (Methanococcus jannaschii).